The following is a 587-amino-acid chain: 2-succinyl-5-enolpyruvyl-6-hydroxy-3-cyclohexene-1-carboxylate synthase (587 aa).

The protein belongs to the TPP enzyme family. MenD subfamily. As to quaternary structure, homodimer. Requires Mg(2+) as cofactor. The cofactor is Mn(2+). It depends on thiamine diphosphate as a cofactor.

The enzyme catalyses isochorismate + 2-oxoglutarate + H(+) = 5-enolpyruvoyl-6-hydroxy-2-succinyl-cyclohex-3-ene-1-carboxylate + CO2. It participates in quinol/quinone metabolism; 1,4-dihydroxy-2-naphthoate biosynthesis; 1,4-dihydroxy-2-naphthoate from chorismate: step 2/7. The protein operates within cofactor biosynthesis; phylloquinone biosynthesis. Catalyzes the thiamine diphosphate-dependent decarboxylation of 2-oxoglutarate and the subsequent addition of the resulting succinic semialdehyde-thiamine pyrophosphate anion to isochorismate to yield 2-succinyl-5-enolpyruvyl-6-hydroxy-3-cyclohexene-1-carboxylate (SEPHCHC). The chain is 2-succinyl-5-enolpyruvyl-6-hydroxy-3-cyclohexene-1-carboxylate synthase from Prochlorococcus marinus (strain MIT 9301).